Reading from the N-terminus, the 2492-residue chain is MGSQISEKYYAREPIAIVGTSCRFPGGASSPSKLWELLDNPRDVVQKIPPRRFSTEAFYNADSQHHGVSPSDLIKGLRLTLQWSTNVKHAYLLDDDPRGFDRDFFAINPKEAEAMDPQQRILLETVYESVESAGYSIEQLRGSSTAVFVGCMSFDYQFAAIRGIDSTLPQYHATGAAMSILANRVSYFYDWKGPSVAIDTACSSSLVALHQAVSALRSGDAKLAVAAGSNLILGPEPFISESKLNMLSPNGRSYMWDASADGYTRGEGFSVLLLKTLTKALADSDHIECVIRETGVNSDGKTPGITMPSSNAQAQLIRDTYAKCGLDPNRESDRPQFFEAHGTGTQAGDPIEARAIQEVFFPDHTQPTDSKLLVGSVKTVIGHTEGTAGLAGVLKATLAIQHSQIPANLHFNELNPKIRPYYDNLRIPTETTPWPTLSPGAPRRVSVNSFGFGGTNAHAIVESWDGPYVRERSPAPNAIGAGPFVLSANSSQALAANAGALAEYLKEHPTTNLGQLGYTLFKRTNLPFRAAFSGSSVECLVEKLQAGKESLKSNSRITTLPESLPPRVLGVFTGQGAQWAKMGEGLYQTSMVFRNSVEQMQHSLDSLPESDRPNWTLAEQLHAPKETSRVGQATVSQPLCTAIQVALVDVLHVVGVELSAVVGHSSGEIGAAYAAGYLSAGDAIRIAYYRGFHSHLAQGPGGKRGSMMAVGLSYDQALSFCNELSGGITVAASNSYTSCTLAGDAEVIEEAKSRLEENGTFARVLAVDTAYHSHHMKPCATPYLESLKQCDIQVQKPKKGCAWYSSVWGSDGSSRSFNTEGELLQGQYWIENLTHPVLFSQALARALNEDQCFDCALEVGPHPALKGPSLEIIKTLTGVSLPYSGVLKRGEGAAEAFADALGLLWKSFPSSRPTITFNGICRAFSAVKPSSMTILKNLPNYSWDHATLFWKESRASRNFRTPKHAPHELLGRSVSHGEHSRREVHWRQVMRLRELPWLRGHKIQGEILFPASGYLSMAYEAAIRLVDEQQSVRIVEMQDMDIVRAMRLEDDTSGLEVLFTIHVTSQSQSCINANVACYSGAVDAPQPLDAHQTELTAHFNGRIRLWLEQPSAYTLPLRSEPLLPMSELNMAQVYSSLSKEGFDYSGDFQAKSMLRRLGHTVVTLSSPSPVSWTHTLTHPAPIDTAVQGLLTAFSFPGDGRIGTTYLPTRIESVRISTAPSESDAPILKADSVVTLTDVTTITGDVDIFDAASCHTQVQMRGVQMTAIGKPPDRWLYAGKIWARDIAYGLEPGSGTQFSDDDRLLYEQLVRTAYFYLRQLRSKIRPPELMLMGKFRRHMMRWVTEHLFPQIESGQHPDIRTEWKDDTLDTVQRWRNSRPADNNDMNLLHAMGQSLIPIVRGTVPPLKVLVQDGMLDRLYFEGIGFRDGNVDLGAIVKQLGHEHPRMRIVEVGAGTGGTTRTVLDALETRYAAYTYTDISTGFFENARSVFSQHASKLTFKTLNIENDPVDQGFTEGSFDMLIASNCLHATHSLENTLRQCRKLLRPGGRLVLLEITRDFLPIQMIMATLPGWFLGMDEGRLWAPTVTLDRWDEILKTTGFSGVDISSTPSYCSVIVSQAVDETVSVLRNPLASPDGVPSLSEIVIIGGVGSGLAPQIQSLLTSTIPVETRIASSLEDVEVNRGSTVLCLGDLDSPSFCNMDQTRFEGLQKVFQAANAVLWVTSGATSGTNPEANITVGMGSTLMAERGDLKLQFLDVDDPTTIDPSMLARMLLRLAILDQSKSDETLWTIEPELTLKNGALYIPRVQPLDVINRQSTARYRQVIEDIDLNSASPVVDLVKYQDSWKLQSSPIDSTRVNGIEVRVTASSLHTLSCEGGKPEYIFMGRELLSGDNIIGLSASNSSIANITDDQVLHRWQDSQTGAINVAQLSDLLAKALAENLLRNTTGPVWIHGAPSNLSEAIGEVTKEEGLDVFQTTSDLAQVAAFNFIHPYATRQDIQDKQPSGLRNFVDLEHSELRNEALHTSVAASLPVSAISHRCMMDLTHGINRSYLAKLAARCLTEDRKSSEDHSQVILIDRIASESSKDLGPTTVIDWHAANTVTALVRPLEHRDLFFPSKSYLLFGMTGDLGISVCKWMVDNGARNVVLASRNPNVPSSVLNFMSRKSATVRALSVDITDMESLCTAREDIESTMPPIGGVMNAAMVLRDRLFHDLTWEDFAAVLGPKVQGTQNINNAFGQKESALDFFVCFSSATSIIGTVGQSAYAAANHFMVSLVQQRKRRGLAGSIVHISVLTGLGYIFRRGSEHTAVIDKALLPRLERQAETDLHEMLAEAIVCGRPGSSQPPELITGIKAVFQGEWRDDPRLLGYLGQQQLGNDSAKDQAAGMVSVETQLDAADDPAECLPILEKRFAQALGNMLEIDPEKVDGSMPVASLGIDSLVAIRIREWFMKELGVEVPVLKIMSVGHSLSRVCDDVLVDWRRVKKEGELEDKK.

In terms of domain architecture, Ketosynthase family 3 (KS3) spans 12–463 (REPIAIVGTS…GTNAHAIVES (452 aa)). Active-site for beta-ketoacyl synthase activity residues include C202, H341, and H383. The malonyl-CoA:ACP transacylase (MAT) domain stretch occupies residues 571–866 (VFTGQGAQWA…LEVGPHPALK (296 aa)). The N-terminal hotdog fold stretch occupies residues 967–1110 (HELLGRSVSH…GRIRLWLEQP (144 aa)). The dehydratase (DH) domain stretch occupies residues 967 to 1270 (HELLGRSVSH…GVQMTAIGKP (304 aa)). The PKS/mFAS DH domain maps to 967–1273 (HELLGRSVSH…MTAIGKPPDR (307 aa)). H1001 acts as the Proton acceptor; for dehydratase activity in catalysis. A C-terminal hotdog fold region spans residues 1125–1273 (MSELNMAQVY…MTAIGKPPDR (149 aa)). D1183 (proton donor; for dehydratase activity) is an active-site residue. A C-methyltransferase (CMeT) domain region spans residues 1431 to 1604 (LGAIVKQLGH…KTTGFSGVDI (174 aa)). The segment at 2118 to 2293 (SYLLFGMTGD…AGSIVHISVL (176 aa)) is ketoreductase (KR) domain. Positions 2404–2479 (PILEKRFAQA…RVCDDVLVDW (76 aa)) constitute a Carrier domain. Position 2438 is an O-(pantetheine 4'-phosphoryl)serine (S2438).

Highly reducing polyketide synthase; part of the gene cluster that mediates the biosynthesis of fujikurins A-D, secondary metabolites playing a role during rice infection. The polyketide synthase PKS19 acts with the trans-enoyl reductase FFUJ_12240 and the polyketide transferase FFUJ_12241 to produce fujikurins, however, the biosynthesis pathway has not been identified yet. This chain is Polyketide synthase 19, found in Gibberella fujikuroi (strain CBS 195.34 / IMI 58289 / NRRL A-6831) (Bakanae and foot rot disease fungus).